The following is a 692-amino-acid chain: MKSVESLTEAEAAEELTRLADEIAAHDIRYYREDAPTISDAAYDALRRRNDELEAAFPHLIRENSPSLRIGAARAEQFAPVEHGVPMLSLDNAFSDADALEFDARVKRFLRLDEEVAYTAEPKIDGLSCSIRYENGRLVRAATRGDGRVGEDVTANVRTIGEIPQKLHGQAWPEVIEIRGEVYLGHAEFAALNEAAASAGQKTYANPRNAAAGSLRQIDPKITAQRPLRFFAYAWGFVSAPFAQTQWEALQALKAWGFRTTPQSRCVKGAEGLMEAYREMEAERPHLGFDIDGVVYKVDRLEWQQRLGFVSRAPRWGIARKFPAEQARTVLEAIDIQVGRTGALTPVARLTPVTVGGVVVTNATLHNADEIARLDVRVGDTVVLQRAGDVIPQILRVIPEERPKDSVPYDFPHVCPCPLRTEVVRETTASGAETVVRRCSGEFACPFQRINHLLHFVSRRAFDIEGLGEKQLTAFFERGWIKAPADIFRLHEKRDELLAMERMGETSVGNLLANIEARRTIGLDRFIYGLGIRHIGETTATVMARGYGTAAHFLEAMDKVAARDPEAVEELDALDQIGGAVIEAAAAFFGEDHNRAMVEDLAGQLTILDAEKPKTDTAVAGKTVVFTGALERMTRDEAKAQAERLGAKVSGSVSKKTDIVVAGPGAGSKLKTAAELGIQVLTEDEWLEMVGS.

Residues 40-44 (DAAYD), 89-90 (SL), and Glu-121 each bind NAD(+). The active-site N6-AMP-lysine intermediate is Lys-123. NAD(+) contacts are provided by Arg-144, Glu-181, Lys-297, and Lys-321. Cys-415, Cys-417, Cys-439, and Cys-445 together coordinate Zn(2+). One can recognise a BRCT domain in the interval 614–692 (KTDTAVAGKT…EDEWLEMVGS (79 aa)).

It belongs to the NAD-dependent DNA ligase family. LigA subfamily. Mg(2+) is required as a cofactor. Mn(2+) serves as cofactor.

It carries out the reaction NAD(+) + (deoxyribonucleotide)n-3'-hydroxyl + 5'-phospho-(deoxyribonucleotide)m = (deoxyribonucleotide)n+m + AMP + beta-nicotinamide D-nucleotide.. Functionally, DNA ligase that catalyzes the formation of phosphodiester linkages between 5'-phosphoryl and 3'-hydroxyl groups in double-stranded DNA using NAD as a coenzyme and as the energy source for the reaction. It is essential for DNA replication and repair of damaged DNA. This is DNA ligase from Phenylobacterium zucineum (strain HLK1).